Consider the following 357-residue polypeptide: Chorismate synthase (357 aa).

R47 serves as a coordination point for NADP(+). FMN-binding positions include 123–125 (RAS), G281, 296–300 (KPTSS), and R324.

Belongs to the chorismate synthase family. Homotetramer. Requires FMNH2 as cofactor.

The enzyme catalyses 5-O-(1-carboxyvinyl)-3-phosphoshikimate = chorismate + phosphate. It functions in the pathway metabolic intermediate biosynthesis; chorismate biosynthesis; chorismate from D-erythrose 4-phosphate and phosphoenolpyruvate: step 7/7. Catalyzes the anti-1,4-elimination of the C-3 phosphate and the C-6 proR hydrogen from 5-enolpyruvylshikimate-3-phosphate (EPSP) to yield chorismate, which is the branch point compound that serves as the starting substrate for the three terminal pathways of aromatic amino acid biosynthesis. This reaction introduces a second double bond into the aromatic ring system. The polypeptide is Chorismate synthase (Chlamydia trachomatis serovar A (strain ATCC VR-571B / DSM 19440 / HAR-13)).